Here is an 807-residue protein sequence, read N- to C-terminus: Tyrosine-protein phosphatase non-receptor type 22 (807 aa).

One can recognise a Tyrosine-protein phosphatase domain in the interval 24 to 289 (FANEFLKLKR…ELVYNAVLEL (266 aa)). Serine 35 is subject to Phosphoserine; by PKC/PRKCD. A disulfide bridge connects residues cysteine 129 and cysteine 227. The Phosphocysteine intermediate role is filled by cysteine 227. Substrate contacts are provided by residues 227–233 (CSAGCGR) and glutamine 274. Phosphoserine is present on residues serine 449, serine 635, serine 684, and serine 692. Disordered regions lie at residues 676-700 (SVKL…LPER) and 724-746 (SYPD…GKSF).

Belongs to the protein-tyrosine phosphatase family. Non-receptor class 4 subfamily. As to quaternary structure, interacts with CSK. Interacts with LPXN. Interacts with CBL. Interacts with TRAF3 (via MATH domain); the interaction promotes TRAF3 polyubiquitination. In terms of processing, phosphorylation on Ser-35 by PKC/PRKCD abrogates its ability to dephosphorylate and inactivate the SRC family kinases. Expressed in bone marrow, B and T-cells, PBMCs, natural killer cells, monocytes, dendritic cells and neutrophils. Both isoform 1 and 4 are predominantly expressed in lymphoid tissues and cells. Isoform 1 is expressed in thymocytes and both mature B and T-cells.

The protein localises to the cytoplasm. It catalyses the reaction O-phospho-L-tyrosyl-[protein] + H2O = L-tyrosyl-[protein] + phosphate. The enzyme catalyses N-(5Z,8Z,11Z,14Z-eicosatetraenoyl)-ethanolamine phosphate + H2O = N-(5Z,8Z,11Z,14Z-eicosatetraenoyl)-ethanolamine + phosphate. Its activity is regulated as follows. Down-regulated by phosphorylation. Functionally, acts as a negative regulator of T-cell receptor (TCR) signaling by direct dephosphorylation of the Src family kinases LCK and FYN, ITAMs of the TCRz/CD3 complex, as well as ZAP70, VAV, VCP and other key signaling molecules. Associates with and probably dephosphorylates CBL. Dephosphorylates LCK at its activating 'Tyr-394' residue. Dephosphorylates ZAP70 at its activating 'Tyr-493' residue. Dephosphorylates the immune system activator SKAP2. Positively regulates toll-like receptor (TLR)-induced type 1 interferon production. Promotes host antiviral responses mediated by type 1 interferon. Regulates NOD2-induced pro-inflammatory cytokine secretion and autophagy. Acts as an activator of NLRP3 inflammasome assembly by mediating dephosphorylation of 'Tyr-861' of NLRP3. Dephosphorylates phospho-anandamide (p-AEA), an endocannabinoid to anandamide (also called N-arachidonoylethanolamide). The polypeptide is Tyrosine-protein phosphatase non-receptor type 22 (PTPN22) (Homo sapiens (Human)).